Reading from the N-terminus, the 181-residue chain is Malignant T-cell-amplified sequence 1-A (181 aa).

In terms of domain architecture, PUA spans 92–171; the sequence is LPHQQVDKGA…IGIENIHYLN (80 aa).

This sequence belongs to the MCTS1 family.

The protein resides in the cytoplasm. Plays a role as translation enhancer and involved in cell cycle regulation. The protein is Malignant T-cell-amplified sequence 1-A (mcts1-a) of Xenopus laevis (African clawed frog).